A 150-amino-acid polypeptide reads, in one-letter code: uncharacterized protein (150 aa).

A signal peptide spans 1-28 (MPLDVWIAFSYFIDFFQWLFMLNAEVMR).

This is an uncharacterized protein from Archaeoglobus fulgidus (strain ATCC 49558 / DSM 4304 / JCM 9628 / NBRC 100126 / VC-16).